Here is a 115-residue protein sequence, read N- to C-terminus: U3-lycotoxin-Ls1s (115 aa).

The first 20 residues, Met-1–Ser-20, serve as a signal peptide directing secretion. Positions Glu-21–Arg-44 are excised as a propeptide. 4 disulfide bridges follow: Cys-48/Cys-63, Cys-55/Cys-72, Cys-62/Cys-87, and Cys-74/Cys-85.

The protein belongs to the neurotoxin 19 (CSTX) family. 01 subfamily. Expressed by the venom gland.

The protein resides in the secreted. This is U3-lycotoxin-Ls1s from Lycosa singoriensis (Wolf spider).